Consider the following 302-residue polypeptide: Short-chain dehydrogenase/reductase 1 (302 aa).

Residues 20–23 (NKGL), Arg43, 71–72 (DV), and Asn98 contribute to the NADP(+) site. A substrate-binding site is contributed by Ser170. Residues Tyr226, Lys230, and 257–262 (VKTDIN) each bind NADP(+). The Proton acceptor role is filled by Tyr226.

The protein belongs to the short-chain dehydrogenases/reductases (SDR) family. Mainly expressed in flowers and flower buds, to a lesser extent in leaves and, at low levels, in stems and roots.

The protein operates within secondary metabolite biosynthesis; terpenoid biosynthesis. Its function is as follows. Component of the oleanane-type triterpene saponins (e.g. saponarioside A and saponarioside B) biosynthetic pathway, leading to the production of natural products with detergent properties used as traditional sources of soap. A dehydrogenase/reductase that, together with UGT74CD1, mediates the conversion of QA-tri to QA-triF; UGT74CD1 may transfer 4-keto-6-deoxy-glucose to QA-tri, which is in turn reduced to D-fucose by SDR1, thus leading to QA-triF formation via the initiation of the C-28 sugar chain. In Saponaria officinalis (Common soapwort), this protein is Short-chain dehydrogenase/reductase 1.